Here is a 603-residue protein sequence, read N- to C-terminus: Geraniol synthase, chloroplastic (603 aa).

The N-terminal 50 residues, 1–50, are a transit peptide targeting the chloroplast; sequence MALQMIAPFLSSFLPNPRHSLAAHGLTHQKCVSKHISCSTTTPTYSTTVP. Residues Arg301, Asp338, Asp342, Arg479, and Asp482 each coordinate (2E)-geranyl diphosphate. Residues Asp338 and Asp342 each coordinate Mg(2+). The DDXXD motif motif lies at 338–342; that stretch reads DDIYD. Mg(2+) contacts are provided by Asp482, Thr486, and Glu490.

The protein belongs to the terpene synthase family. Tpsb subfamily. As to quaternary structure, homodimer. It depends on Mg(2+) as a cofactor. The cofactor is Mn(2+). In terms of tissue distribution, expressed in the oil cells of the leaves.

The protein localises to the plastid. The protein resides in the chloroplast. It carries out the reaction (2E)-geranyl diphosphate + H2O = (2E)-geraniol + diphosphate. Its pathway is secondary metabolite biosynthesis; terpenoid biosynthesis. Functionally, monoterpene synthase that catalyzes the formation of geraniol from geranyl diphosphate. This Cinnamomum tenuipile (Alseodaphne mollis) protein is Geraniol synthase, chloroplastic (GerS).